Here is a 184-residue protein sequence, read N- to C-terminus: Nucleoside triphosphate pyrophosphatase (184 aa).

The active-site Proton acceptor is aspartate 66.

This sequence belongs to the Maf family. Requires a divalent metal cation as cofactor.

The protein localises to the cytoplasm. The catalysed reaction is a ribonucleoside 5'-triphosphate + H2O = a ribonucleoside 5'-phosphate + diphosphate + H(+). It catalyses the reaction a 2'-deoxyribonucleoside 5'-triphosphate + H2O = a 2'-deoxyribonucleoside 5'-phosphate + diphosphate + H(+). In terms of biological role, nucleoside triphosphate pyrophosphatase. May have a dual role in cell division arrest and in preventing the incorporation of modified nucleotides into cellular nucleic acids. The polypeptide is Nucleoside triphosphate pyrophosphatase (Prochlorococcus marinus (strain MIT 9313)).